The chain runs to 40 residues: Accessory gland-specific peptide 57Db (40 aa).

A signal peptide spans 1 to 17 (MKITSALVLLFAGVAFA).

As to expression, lumen fluid of male accessory glands, becomes seminal fluid.

Its subcellular location is the secreted. In terms of biological role, transferred from male to female during mating and may affect egglaying and behavior after mating. The sequence is that of Accessory gland-specific peptide 57Db (Mst57Db) from Drosophila melanogaster (Fruit fly).